Here is a 363-residue protein sequence, read N- to C-terminus: Dioxygenase sphC (363 aa).

Residues His183, Asp185, and His259 each coordinate Fe cation.

This sequence belongs to the PhyH family. Homodimer. Requires Fe cation as cofactor.

It carries out the reaction sphingofungin B1 + 2-oxoglutarate + O2 = sphingofungin B + succinate + CO2. It participates in secondary metabolite biosynthesis. Functionally, dioxygenase; part of the gene cluster that mediates the biosynthesis of sphingofungins, bioactive molecules acting as sphingolipid inhibitors via inhibiting serine palmitoyl transferase (SPT). Within the pathway, sphC catalyzes the hydrolxylation at C-4 to convert sphingofungin B1 into sphingofungin B as well as presphingofungin into sphingofungin B2. Sphingofungin biosynthesis starts with the PKS sphB that produces an C18 polyketide precursor 3-hydroxyoctadeca-4,10-dienoyl-ACP containing one delta-6 desaturation and one delta-12 desaturation. The aminoacyl transferase sphA uses the sphB product to produce 3-keto-presphingofungin by adding an aminomalonate molecule. SphF then reduces the C-3 ketone of 3-keto-presphingofungin which leads to presphingofungin. The cytochrome P450 monooxygenase sphH converts presphingofungin into sphingofungin B1 which is further converted to sphingofungin B by the dioxygenase sphC. SphC is also able to convert presphingofungin into sphingofungin B2. The acetyltransferase sphE acetylates sphingofungin B to produce sphingofungin C, but can also convert sphingofungin B1 into sphingofungin C1 and sphingofungin B2 into sphingofungin C2. Finally, sphingofungin C can be spontaneously converted into sphingofungin D. The sequence is that of Dioxygenase sphC from Aspergillus fumigatus (strain CBS 144.89 / FGSC A1163 / CEA10) (Neosartorya fumigata).